The sequence spans 455 residues: 3-phosphoshikimate 1-carboxyvinyltransferase (455 aa).

Over residues 1-19 the composition is skewed to polar residues; sequence MSHGASSRPATARKSSGLS. Residues 1 to 25 form a disordered region; that stretch reads MSHGASSRPATARKSSGLSGTVRIP. K28 serves as a coordination point for phosphoenolpyruvate. 3-phosphoshikimate contacts are provided by S29 and R33. Residue R128 participates in phosphoenolpyruvate binding. The 3-phosphoshikimate site is built by S173, A174, Q175, D326, and K353. Phosphoenolpyruvate is bound at residue Q175. D326 acts as the Proton acceptor in catalysis. R357 and R405 together coordinate phosphoenolpyruvate.

It belongs to the EPSP synthase family. In terms of assembly, monomer.

It is found in the cytoplasm. It carries out the reaction 3-phosphoshikimate + phosphoenolpyruvate = 5-O-(1-carboxyvinyl)-3-phosphoshikimate + phosphate. Its pathway is metabolic intermediate biosynthesis; chorismate biosynthesis; chorismate from D-erythrose 4-phosphate and phosphoenolpyruvate: step 6/7. Is resistant to inhibition by glyphosate (glyphosate-tolerant) like other members of class II EPSPS, in contrast to class I EPSPS, which is glyphosate-sensitive. Is much less sensitive to inhibition by the (R)-difluoromethyl and (R)-phosphonate analogs of the tetrahedral reaction intermediate than the representative class I EPSPS from E.coli. Is highly activated in the presence of cations, such as NH4(+), Rb(+), and K(+). Its function is as follows. Catalyzes the transfer of the enolpyruvyl moiety of phosphoenolpyruvate (PEP) to the 5-hydroxyl of shikimate-3-phosphate (S3P) to produce enolpyruvyl shikimate-3-phosphate and inorganic phosphate. The chain is 3-phosphoshikimate 1-carboxyvinyltransferase from Agrobacterium sp. (strain CP4).